The following is a 218-amino-acid chain: Peroxiredoxin-like 2A (218 aa).

Residues 3–101 (MWSIGVGAVG…DELGVPLYAV (99 aa)) are thioredoxin-like fold. Active-site redox-active residues include Cys-74 and Cys-77.

It belongs to the peroxiredoxin-like PRXL2 family. PRXL2A subfamily. Expressed in kidney, liver, skin, and brain. Widely expressed with highest levels detected in adipose tissue.

It localises to the cytoplasm. The protein resides in the secreted. Functionally, involved in redox regulation of the cell. Acts as an antioxidant. Inhibits TNFSF11-induced NFKB1 and JUN activation and osteoclast differentiation. May affect bone resorption and help to maintain bone mass. Acts as a negative regulator of macrophage-mediated inflammation by inhibiting macrophage production of inflammatory cytokines, probably through suppression of the MAPK signaling pathway. This is Peroxiredoxin-like 2A (Prxl2a) from Mus musculus (Mouse).